We begin with the raw amino-acid sequence, 175 residues long: Alpha-crystallin B chain (175 aa).

Methionine 1 carries the post-translational modification N-acetylmethionine. Position 19 is a phosphoserine (serine 19). The O-linked (GlcNAc) serine glycan is linked to serine 41. Serine 45 and serine 59 each carry phosphoserine. Positions 56 to 164 constitute a sHSP domain; sequence RAPSWIDTGL…PERTIPITRE (109 aa). Position 83 (histidine 83) interacts with Zn(2+). Lysine 92 is subject to N6-acetyllysine. Residues histidine 104, glutamate 106, histidine 111, and histidine 119 each coordinate Zn(2+). Residues 142–175 are disordered; the sequence is VLTVNGPRKQAPGPERTIPITREEKPAVTAAPKK. The residue at position 166 (lysine 166) is an N6-acetyllysine. Threonine 170 carries an O-linked (GlcNAc) threonine glycan.

It belongs to the small heat shock protein (HSP20) family. Heteromer composed of three CRYAA and one CRYAB subunits. Aggregates with homologous proteins, including the small heat shock protein HSPB1, to form large heteromeric complexes. Inter-subunit bridging via zinc ions enhances stability, which is crucial as there is no protein turn over in the lens. Interacts with HSPBAP1 and TTN/titin. Interacts with TMEM109; in the cellular response to DNA damage. Interacts with DES; binds rapidly during early stages of DES filament assembly and a reduced binding seen in the later stages. Interacts with TMED10; the interaction mediates the translocation from the cytoplasm into the ERGIC (endoplasmic reticulum-Golgi intermediate compartment) and thereby secretion. Interacts with ATP6V1A and with MTOR, forming a ternary complex. In terms of tissue distribution, lens as well as other tissues.

Its subcellular location is the cytoplasm. The protein localises to the nucleus. It localises to the secreted. It is found in the lysosome. May contribute to the transparency and refractive index of the lens. Has chaperone-like activity, preventing aggregation of various proteins under a wide range of stress conditions. In lens epithelial cells, stabilizes the ATP6V1A protein, preventing its degradation by the proteasome. The sequence is that of Alpha-crystallin B chain (CRYAB) from Oryctolagus cuniculus (Rabbit).